The chain runs to 543 residues: Serine/threonine-protein kinase Chk2 (543 aa).

The disordered stretch occupies residues 1-66 (MSRESDVEAQ…SGTLSSLETV (66 aa)). Polar residues predominate over residues 8–22 (EAQQSHGSSACSQPH). Residues 23–62 (GSVTQSQGSSSQSQGISSSSTSTMPNSSQSSHSSSGTLSS) show a composition bias toward low complexity. The residue at position 62 (Ser-62) is a Phosphoserine; by PLK3. Thr-68 bears the Phosphothreonine; by ATM and MAP3K20 mark. Ser-73 bears the Phosphoserine; by PLK3 mark. The FHA domain maps to 113–175 (YWFGRDKSCE…NGTFVNTELV (63 aa)). In terms of domain architecture, Protein kinase spans 220–486 (YIMSKTLGSG…TEEALRHPWL (267 aa)). Residues 227–234 (GSGACGEV), Lys-249, and 302–308 (ELMEGGE) each bind ATP. Asp-347 functions as the Proton acceptor in the catalytic mechanism. ATP-binding positions include 351-352 (EN) and Asp-368. A T-loop/activation segment region spans residues 368–394 (DFGHSKILGETSLMRTLCGTPTYLAPE). At Ser-379 the chain carries Phosphoserine; by autocatalysis. 2 positions are modified to phosphothreonine; by autocatalysis: Thr-383 and Thr-387. Ser-456 is subject to Phosphoserine. Residues 506–517 (TALPQVLAQPST) are compositionally biased toward polar residues. Residues 506–538 (TALPQVLAQPSTSRKRPREGEAEGAETTKRPAV) are disordered. Residues 523 to 534 (REGEAEGAETTK) are compositionally biased toward basic and acidic residues.

The protein belongs to the protein kinase superfamily. CAMK Ser/Thr protein kinase family. CHK2 subfamily. Homodimer. Homodimerization is part of the activation process but the dimer may dissociate following activation. Interacts with PML. Interacts with TP53. Interacts with RB1; phosphorylates RB1. Interacts with BRCA1. Interacts (phosphorylated at Thr-68) with MDC1; requires ATM-mediated phosphorylation of CHEK2. Interacts with TP53BP1; modulates CHEK2 phosphorylation at Thr-68 in response to ionizing radiation. Interacts with CDC25A; phosphorylates CDC25A and mediates its degradation in response to ionizing radiation. Interacts with CUL1; mediates CHEK2 ubiquitination and regulation. Interacts with CDKN2AIP. Interacts (via protein kinase domain) with CCAR2 (via N-terminus). Interacts with SIRT1. It depends on Mg(2+) as a cofactor. Phosphorylated. Phosphorylated at Ser-73 by PLK3 in response to DNA damage, promoting phosphorylation at Thr-68 by ATM and the G2/M transition checkpoint. Phosphorylation at Thr-68 induces homodimerization. Autophosphorylates at Thr-383 and Thr-387 in the T-loop/activation segment upon dimerization to become fully active and phosphorylate its substrates like for instance CDC25C. DNA damage-induced autophosphorylation at Ser-379 induces CUL1-mediated ubiquitination and regulates the pro-apoptotic function. Phosphorylation at Ser-456 also regulates ubiquitination. Phosphorylated by PLK4. Post-translationally, ubiquitinated. CUL1-mediated ubiquitination regulates the pro-apoptotic function. Ubiquitination may also regulate protein stability. Ubiquitinated by RNF8 via 'Lys-48'-linked ubiquitination. High expression is found in testis, spleen, colon and peripheral blood leukocytes. Low expression is found in other tissues.

The protein localises to the nucleus. It is found in the PML body. It localises to the nucleoplasm. It carries out the reaction L-seryl-[protein] + ATP = O-phospho-L-seryl-[protein] + ADP + H(+). The catalysed reaction is L-threonyl-[protein] + ATP = O-phospho-L-threonyl-[protein] + ADP + H(+). With respect to regulation, activated through phosphorylation at Thr-68 by ATM in response to DNA double-strand breaks. Activation is modulated by several mediators including MDC1 and TP53BP1. Induces homodimerization with exchange of the T-loop/activation segment between protomers and transphosphorylation of the protomers. The autophosphorylated kinase dimer is fully active. Negatively regulated by PPM1D through dephosphorylation of Thr-68. Serine/threonine-protein kinase which is required for checkpoint-mediated cell cycle arrest, activation of DNA repair and apoptosis in response to the presence of DNA double-strand breaks. May also negatively regulate cell cycle progression during unperturbed cell cycles. Following activation, phosphorylates numerous effectors preferentially at the consensus sequence [L-X-R-X-X-S/T]. Regulates cell cycle checkpoint arrest through phosphorylation of CDC25A, CDC25B and CDC25C, inhibiting their activity. Inhibition of CDC25 phosphatase activity leads to increased inhibitory tyrosine phosphorylation of CDK-cyclin complexes and blocks cell cycle progression. May also phosphorylate NEK6 which is involved in G2/M cell cycle arrest. Regulates DNA repair through phosphorylation of BRCA2, enhancing the association of RAD51 with chromatin which promotes DNA repair by homologous recombination. Also stimulates the transcription of genes involved in DNA repair (including BRCA2) through the phosphorylation and activation of the transcription factor FOXM1. Regulates apoptosis through the phosphorylation of p53/TP53, MDM4 and PML. Phosphorylation of p53/TP53 at 'Ser-20' by CHEK2 may alleviate inhibition by MDM2, leading to accumulation of active p53/TP53. Phosphorylation of MDM4 may also reduce degradation of p53/TP53. Also controls the transcription of pro-apoptotic genes through phosphorylation of the transcription factor E2F1. Tumor suppressor, it may also have a DNA damage-independent function in mitotic spindle assembly by phosphorylating BRCA1. Its absence may be a cause of the chromosomal instability observed in some cancer cells. Promotes the CCAR2-SIRT1 association and is required for CCAR2-mediated SIRT1 inhibition. Under oxidative stress, promotes ATG7 ubiquitination by phosphorylating the E3 ubiquitin ligase TRIM32 at 'Ser-55' leading to positive regulation of the autophagosme assembly. In terms of biological role, (Microbial infection) Phosphorylates herpes simplex virus 1/HHV-1 protein ICP0 and thus activates its SUMO-targeted ubiquitin ligase activity. The polypeptide is Serine/threonine-protein kinase Chk2 (Homo sapiens (Human)).